A 463-amino-acid polypeptide reads, in one-letter code: Argininosuccinate lyase (463 aa).

The protein belongs to the lyase 1 family. Argininosuccinate lyase subfamily.

It localises to the cytoplasm. It catalyses the reaction 2-(N(omega)-L-arginino)succinate = fumarate + L-arginine. Its pathway is amino-acid biosynthesis; L-arginine biosynthesis; L-arginine from L-ornithine and carbamoyl phosphate: step 3/3. This Bradyrhizobium sp. (strain BTAi1 / ATCC BAA-1182) protein is Argininosuccinate lyase.